A 228-amino-acid chain; its full sequence is Interferon-induced transmembrane protein 10 (228 aa).

The Extracellular segment spans residues 1–154; the sequence is MREGKRGPPC…PDTTEVNDYY (154 aa). Positions 29–49 are disordered; sequence AQGPGQCPAPLGDPASTTDGA. Residues 155-175 form a helical membrane-spanning segment; it reads LWSIFNFVYLNFCCLGFIALA. S-palmitoyl cysteine attachment occurs at residues Cys167 and Cys168. The Cytoplasmic portion of the chain corresponds to 176-200; sequence YSLKVRDKKLLNDLNGAVEDAKTAR. A helical transmembrane segment spans residues 201-221; the sequence is LFNITSSALAASCIILVFIFL. Residues 222-228 are Extracellular-facing; the sequence is RYPLTDY.

It belongs to the CD225/Dispanin family.

The protein localises to the cell membrane. The polypeptide is Interferon-induced transmembrane protein 10 (IFITM10) (Homo sapiens (Human)).